The following is a 362-amino-acid chain: Outer mitochondrial transmembrane helix translocase (362 aa).

Residues 1-19 (MVLKEIPTENITRPLGRNE) lie on the Mitochondrial intermembrane side of the membrane. A helical membrane pass occupies residues 20-42 (VIGLLFRLTIFGAVTYFTIKWMV). Residues 43-362 (DAIDPTRKQK…HEAFMQVPLD (320 aa)) are Cytoplasmic-facing. ATP is bound at residue 137–144 (GPPGCGKT).

This sequence belongs to the AAA ATPase family. MSP1 subfamily.

The protein resides in the mitochondrion outer membrane. It localises to the peroxisome membrane. The protein localises to the postsynaptic cell membrane. It catalyses the reaction [protein]-with a C-terminal TM segment(out) + ATP + H2O = [protein]-with a C-terminal TM segment(in) + ADP + phosphate + H(+). In terms of biological role, outer mitochondrial translocase required to remove mislocalized tail-anchored transmembrane proteins on mitochondria. Specifically recognizes and binds tail-anchored transmembrane proteins: acts as a dislocase that mediates the ATP-dependent extraction of mistargeted tail-anchored transmembrane proteins from the mitochondrion outer membrane. Also plays a critical role in regulating the surface expression of AMPA receptors (AMPAR), thereby regulating synaptic plasticity and learning and memory. This is Outer mitochondrial transmembrane helix translocase from Danio rerio (Zebrafish).